The primary structure comprises 280 residues: Transcription factor ovo-like homolog lin-48 (280 aa).

4 consecutive C2H2-type zinc fingers follow at residues 133–155 (LTCH…IKCH), 161–183 (YLCT…TRTH), 189–212 (YKCE…RKVH), and 228–251 (FVCE…KVVH).

It localises to the nucleus. Transcription factor. Involved in development of the hindgut, the male tail, and the excretory duct cell. Involved in modulating function of excretory duct cells. Plays a role in left/right patterning of cell fates in the hindgut. The sequence is that of Transcription factor ovo-like homolog lin-48 from Caenorhabditis elegans.